The primary structure comprises 217 residues: uncharacterized protein (217 aa).

This sequence to M.tuberculosis Rv2926c.

This is an uncharacterized protein from Mycobacterium leprae (strain TN).